Reading from the N-terminus, the 297-residue chain is Probable endonuclease 4 (297 aa).

9 residues coordinate Zn(2+): His-68, His-109, Glu-144, Asp-178, His-181, His-213, Asp-226, His-228, and Glu-258.

It belongs to the AP endonuclease 2 family. It depends on Zn(2+) as a cofactor.

The enzyme catalyses Endonucleolytic cleavage to 5'-phosphooligonucleotide end-products.. Endonuclease IV plays a role in DNA repair. It cleaves phosphodiester bonds at apurinic or apyrimidinic (AP) sites, generating a 3'-hydroxyl group and a 5'-terminal sugar phosphate. In Enterococcus faecalis (strain ATCC 700802 / V583), this protein is Probable endonuclease 4.